A 244-amino-acid chain; its full sequence is Uridylate kinase (244 aa).

16–19 (KLSG) contacts ATP. Residue Gly58 coordinates UMP. Residues Gly59 and Arg63 each coordinate ATP. Residues Asp78 and 139–146 (VGAPYFTT) contribute to the UMP site. Thr166, Tyr172, and Asp175 together coordinate ATP.

This sequence belongs to the UMP kinase family. In terms of assembly, homohexamer.

Its subcellular location is the cytoplasm. It catalyses the reaction UMP + ATP = UDP + ADP. The protein operates within pyrimidine metabolism; CTP biosynthesis via de novo pathway; UDP from UMP (UMPK route): step 1/1. Its activity is regulated as follows. Inhibited by UTP. Catalyzes the reversible phosphorylation of UMP to UDP. This Novosphingobium aromaticivorans (strain ATCC 700278 / DSM 12444 / CCUG 56034 / CIP 105152 / NBRC 16084 / F199) protein is Uridylate kinase.